The sequence spans 492 residues: Protein adenylyltransferase Fic (492 aa).

The span at 1 to 17 shows a compositional bias: low complexity; that stretch reads MCTEAEQPSPPAQQQEQ. A disordered region spans residues 1-25; that stretch reads MCTEAEQPSPPAQQQEQGNPPLCKA. Residues 33-55 traverse the membrane as a helical segment; the sequence is LYRLVLLFVAGSLAAWTFHALSS. 2 TPR repeats span residues 118 to 151 and 152 to 186; these read ALGALRMAQDLYLAGKDDKAARLFEHALALAPRH and PEVLLRYGEFLEHNQRNIVLADQYYFQALTISPSN. The Inhibitory (S/T)XXXE(G/N) motif signature appears at 243 to 248; the sequence is SVGIEG. ATP-binding positions include Glu-247 and 328-331; that span reads VGGH. The Fido domain occupies 297–432; it reads ITIKDILELH…IRPFVRFIAD (136 aa). Residue His-375 is part of the active site. Residues 379-386, 411-412, and Asn-419 each bind ATP; these read DGNGRTSR and YY.

It belongs to the fic family. As to quaternary structure, homodimer.

It localises to the membrane. The enzyme catalyses L-tyrosyl-[protein] + ATP = O-(5'-adenylyl)-L-tyrosyl-[protein] + diphosphate. It carries out the reaction L-threonyl-[protein] + ATP = 3-O-(5'-adenylyl)-L-threonyl-[protein] + diphosphate. It catalyses the reaction 3-O-(5'-adenylyl)-L-threonyl-[protein] + H2O = L-threonyl-[protein] + AMP + H(+). Its activity is regulated as follows. The side chain of Glu-247 determines which of the two opposing activities (AMPylase or de-AMPylase) will take place. In response to endoplasmic reticulum stress, mediates de-AMPylase activity. Adenylyltransferase activity is inhibited by the inhibitory helix present at the N-terminus: Glu-247 binds ATP and competes with ATP-binding at Arg-386, thereby preventing adenylyltransferase activity. In unstressed cells, disengagement of Glu-247 promotes adenylyltransferase activity. Activation dissociates ATP-binding from Glu-247, allowing ordered binding of the entire ATP moiety with the alpha-phosphate in an orientation that is productive for accepting an incoming target hydroxyl side chain. In terms of biological role, protein that can both mediate the addition of adenosine 5'-monophosphate (AMP) to specific residues of target proteins (AMPylation), and the removal of the same modification from target proteins (de-AMPylation), depending on the context. The side chain of Glu-247 determines which of the two opposing activities (AMPylase or de-AMPylase) will take place. Acts as a key regulator of the unfolded protein response (UPR) by mediating AMPylation or de-AMPylation of Hsc70-3/BiP. In unstressed cells, acts as an adenylyltransferase by mediating AMPylation of Hsc70-3/BiP at 'Thr-518', thereby inactivating it. In response to endoplasmic reticulum stress, acts as a phosphodiesterase by mediating removal of ATP (de-AMPylation) from Hsc70-3/BiP at 'Thr-518', leading to restore HSPA5/BiP activity. This chain is Protein adenylyltransferase Fic, found in Drosophila sechellia (Fruit fly).